A 745-amino-acid chain; its full sequence is 1,4-alpha-glucan branching enzyme GlgB (745 aa).

The active-site Nucleophile is the aspartate 416. Glutamate 469 functions as the Proton donor in the catalytic mechanism.

The protein belongs to the glycosyl hydrolase 13 family. GlgB subfamily. Monomer.

The enzyme catalyses Transfers a segment of a (1-&gt;4)-alpha-D-glucan chain to a primary hydroxy group in a similar glucan chain.. The protein operates within glycan biosynthesis; glycogen biosynthesis. Its function is as follows. Catalyzes the formation of the alpha-1,6-glucosidic linkages in glycogen by scission of a 1,4-alpha-linked oligosaccharide from growing alpha-1,4-glucan chains and the subsequent attachment of the oligosaccharide to the alpha-1,6 position. In Shewanella sp. (strain MR-4), this protein is 1,4-alpha-glucan branching enzyme GlgB.